Consider the following 302-residue polypeptide: Probable 5-dehydro-4-deoxyglucarate dehydratase (302 aa).

This sequence belongs to the DapA family.

The catalysed reaction is 5-dehydro-4-deoxy-D-glucarate + H(+) = 2,5-dioxopentanoate + CO2 + H2O. The protein operates within carbohydrate acid metabolism; D-glucarate degradation; 2,5-dioxopentanoate from D-glucarate: step 2/2. The polypeptide is Probable 5-dehydro-4-deoxyglucarate dehydratase (Rhizobium rhizogenes (strain K84 / ATCC BAA-868) (Agrobacterium radiobacter)).